We begin with the raw amino-acid sequence, 139 residues long: Large-conductance mechanosensitive channel (139 aa).

A run of 3 helical transmembrane segments spans residues V19 to I39, M40 to S60, and G81 to I101.

This sequence belongs to the MscL family. As to quaternary structure, homopentamer.

Its subcellular location is the cell inner membrane. Its function is as follows. Channel that opens in response to stretch forces in the membrane lipid bilayer. May participate in the regulation of osmotic pressure changes within the cell. The sequence is that of Large-conductance mechanosensitive channel from Nitrobacter winogradskyi (strain ATCC 25391 / DSM 10237 / CIP 104748 / NCIMB 11846 / Nb-255).